A 193-amino-acid chain; its full sequence is Rho-related protein racB (193 aa).

GTP contacts are provided by alanine 13, glycine 15, lysine 16, threonine 17, cysteine 18, tyrosine 32, threonine 35, glycine 60, lysine 116, aspartate 118, and alanine 159. Threonine 17 is a binding site for Mg(2+). Short sequence motifs (switch) lie at residues 26-37 (NAFPTEYVPTVF) and 57-75 (DTAGQEDYDRIRPLSYPQT). Threonine 35 contacts Mg(2+). Cysteine 190 is modified (cysteine methyl ester). A lipid anchor (S-geranylgeranyl cysteine) is attached at cysteine 190. Positions 191 to 193 (LIF) are cleaved as a propeptide — removed in mature form.

Belongs to the small GTPase superfamily. Rho family. The cofactor is Mg(2+).

It localises to the cell membrane. The protein localises to the cytoplasm. Its subcellular location is the cytoskeleton. It carries out the reaction GTP + H2O = GDP + phosphate + H(+). Its activity is regulated as follows. Regulated by guanine nucleotide exchange factors (GEFs) which promote the exchange of bound GDP for free GTP, GTPase activating proteins (GAPs) which increase the GTP hydrolysis activity, and GDP dissociation inhibitors which inhibit the dissociation of the nucleotide from the GTPase. Small GTPase which cycles between active GTP-bound and inactive GDP-bound states. This Entamoeba histolytica (strain ATCC 30459 / HM-1:IMSS / ABRM) protein is Rho-related protein racB.